The sequence spans 63 residues: Hyphancin-3F (63 aa).

The first 22 residues, 1-22 (MNFSRILFFVFACFVALASVSA), serve as a signal peptide directing secretion. Residues 23–26 (APEP) constitute a propeptide, removed by a dipeptidylpeptidase. The residue at position 61 (Leu61) is a Leucine amide.

This sequence belongs to the cecropin family.

Its subcellular location is the secreted. Functionally, has antibacterial activity. This is Hyphancin-3F from Hyphantria cunea (Fall webworm moth).